The primary structure comprises 114 residues: MRIFVYGSLRTKQGNSHWMTNALLLGEYSIDNYQLYSLGHYPGAVPGNGTVHGEVYRIDNATLAELDALRTRGGEYARQLIQTPYGSAWMYVYQRPVEGLTLIESGNWLDRDQY.

It belongs to the gamma-glutamylcyclotransferase family.

It is found in the cytoplasm. In terms of biological role, may play a role in antibiotic biosynthesis. This Citrobacter rodentium (strain ICC168) (Citrobacter freundii biotype 4280) protein is Gamma-glutamylcyclotransferase family protein ytfP (ytfP).